Reading from the N-terminus, the 165-residue chain is Endoribonuclease YbeY (165 aa).

Positions 130, 134, and 140 each coordinate Zn(2+).

This sequence belongs to the endoribonuclease YbeY family. The cofactor is Zn(2+).

The protein resides in the cytoplasm. Functionally, single strand-specific metallo-endoribonuclease involved in late-stage 70S ribosome quality control and in maturation of the 3' terminus of the 16S rRNA. This chain is Endoribonuclease YbeY, found in Streptococcus gordonii (strain Challis / ATCC 35105 / BCRC 15272 / CH1 / DL1 / V288).